Here is a 64-residue protein sequence, read N- to C-terminus: Disintegrin VA6 (64 aa).

Residues 1–64 form the Disintegrin domain; the sequence is NSANPCCDPV…SDCPRNPYKS (64 aa). 4 cysteine pairs are disulfide-bonded: Cys6/Cys29, Cys20/Cys26, Cys25/Cys50, and Cys38/Cys57. A Cell attachment site motif is present at residues 42 to 44; it reads RGD.

The protein belongs to the venom metalloproteinase (M12B) family. P-II subfamily. P-IId sub-subfamily. As to quaternary structure, homodimer; disulfide-linked. As to expression, expressed by the venom gland.

The protein resides in the secreted. Its function is as follows. Poor inhibitor of platelet aggregation. The disintegrin inhibits the adhesion of cells expressing the RGD-dependent integrin alpha-5/beta-1 (ITGA5/ITGB1) to immobilized fibronectin. Inhibition on alpha-IIb/beta-3 (ITGA2B/ITGB3) is low, and there is no inhibition on alpha-1/beta-1 (ITGA1/ITGB1), alpha-2/beta-1 (ITGA2/ITGB1) and alpha-6/beta-1 (ITGA6/ITGB1). The protein is Disintegrin VA6 of Vipera ammodytes ammodytes (Western sand viper).